The primary structure comprises 269 residues: 5'-nucleotidase SurE (269 aa).

Positions 8, 9, 39, and 92 each coordinate a divalent metal cation.

Belongs to the SurE nucleotidase family. Requires a divalent metal cation as cofactor.

It is found in the cytoplasm. It catalyses the reaction a ribonucleoside 5'-phosphate + H2O = a ribonucleoside + phosphate. Its function is as follows. Nucleotidase that shows phosphatase activity on nucleoside 5'-monophosphates. This chain is 5'-nucleotidase SurE, found in Psychrobacter cryohalolentis (strain ATCC BAA-1226 / DSM 17306 / VKM B-2378 / K5).